A 734-amino-acid chain; its full sequence is Casein kinase II subunit alpha'-interacting protein (734 aa).

Residues 608 to 654 (SLLPSTSSSTSSSSTTSSSSSVASASSDSSSSSSSSSSFSISSSSSP) form a disordered region. Low complexity predominate over residues 612–654 (STSSSTSSSSTTSSSSSVASASSDSSSSSSSSSSFSISSSSSP).

As to quaternary structure, interacts (via C-terminus) with CSNK2A2. Phosphorylated by CK2 (casein kinase II), specifically by complexes containing catalytic subunit CSNK2A2.

It is found in the nucleus. In terms of biological role, may play a role in chromatin regulation of male germ cells. This chain is Casein kinase II subunit alpha'-interacting protein, found in Homo sapiens (Human).